Consider the following 208-residue polypeptide: 3-demethoxyubiquinol 3-hydroxylase (208 aa).

Positions 57, 87, 90, 139, 171, and 174 each coordinate Fe cation.

The protein belongs to the COQ7 family. Fe cation serves as cofactor.

The protein resides in the cell membrane. It carries out the reaction a 5-methoxy-2-methyl-3-(all-trans-polyprenyl)benzene-1,4-diol + AH2 + O2 = a 3-demethylubiquinol + A + H2O. The protein operates within cofactor biosynthesis; ubiquinone biosynthesis. Functionally, catalyzes the hydroxylation of 2-nonaprenyl-3-methyl-6-methoxy-1,4-benzoquinol during ubiquinone biosynthesis. The sequence is that of 3-demethoxyubiquinol 3-hydroxylase from Burkholderia lata (strain ATCC 17760 / DSM 23089 / LMG 22485 / NCIMB 9086 / R18194 / 383).